Consider the following 229-residue polypeptide: Ribosomal RNA small subunit methyltransferase G (229 aa).

S-adenosyl-L-methionine-binding positions include Gly87, Leu92, 138-139 (VE), and Arg154.

Belongs to the methyltransferase superfamily. RNA methyltransferase RsmG family.

The protein resides in the cytoplasm. It carries out the reaction guanosine(527) in 16S rRNA + S-adenosyl-L-methionine = N(7)-methylguanosine(527) in 16S rRNA + S-adenosyl-L-homocysteine. Specifically methylates the N7 position of guanine in position 527 of 16S rRNA. This is Ribosomal RNA small subunit methyltransferase G from Oleidesulfovibrio alaskensis (strain ATCC BAA-1058 / DSM 17464 / G20) (Desulfovibrio alaskensis).